The sequence spans 398 residues: MAKVMIVGAGGVGSVVAHKCAALEDFTDILLASRTVAKCDQIAAHIGSPKVKTAALDAFQVSDTVKLLQDFGADLLINVALPYQDLVLMDACLEAGVDYLDTANYEPPDVAKFEYSWQWAYQDKFKDAGLMALLGCGFDPGVTGVFTAYALKHHFDEIHYLDIVDCNAGNHGQAFATNFNPEINIREITQKGRYHEDGVWQEIDPLSVHRDINYPHIGDRPSYLLYHEELESLVKNIPTLKRARFWMTFSEAYINHLRVLEAVGMTRIDEVEYQGQKIVPLQFLKAVLPEPASLAENYSGQTSIGCYIKGVKDGQAKTYYIYNNCDHAVCFAEVGSQAISYTTGVPAALGGLMMVQGKWKQAGVFNVEEMDPDPFLAKLGEMGLPWHEVVNGPFPFDD.

This sequence belongs to the saccharopine dehydrogenase family.

It catalyses the reaction N(1)-[(S)-3-amino-3-carboxypropyl]agmatine + NADP(+) + H2O = L-aspartate 4-semialdehyde + agmatine + NADPH + H(+). It functions in the pathway amine and polyamine biosynthesis; spermidine biosynthesis. In terms of biological role, dehydrogenase involved in the biosynthesis of spermidine via the carboxyaminopropylagmatine (CAPA) pathway. Catalyzes the reductive condensation of agmatine and L-aspartate-beta-semialdehyde (ASA) into CAPA. Shows activity toward putrescine and 1,3-diaminopropane, but the catalytic efficiency is three to four orders of magnitude lower than that for agmatine. Cannot use cadaverine or spermidine. In Synechocystis sp. (strain ATCC 27184 / PCC 6803 / Kazusa), this protein is Carboxyaminopropylagmatine dehydrogenase.